We begin with the raw amino-acid sequence, 117 residues long: Immunoglobulin lambda variable 7-46 (117 aa).

Residues 1–19 (MAWTPLFLFLLTCCPGSNS) form the signal peptide. The segment at 20 to 44 (QAVVTQEPSLTVSPGGTVTLTCGSS) is framework-1. The 98-residue stretch at 20 to 117 (QAVVTQEPSL…YCLLSYSGAR (98 aa)) folds into the Ig-like domain. An intrachain disulfide couples cysteine 41 to cysteine 109. The interval 45 to 53 (TGAVTSGHY) is complementarity-determining-1. Positions 54–70 (PYWFQQKPGQAPRTLIY) are framework-2. Residues 71–73 (DTS) form a complementarity-determining-2 region. Positions 74 to 109 (NKHSWTPARFSGSLLGGKAALTLLGAQPEDEAEYYC) are framework-3. Positions 110-117 (LLSYSGAR) are complementarity-determining-3.

As to quaternary structure, immunoglobulins are composed of two identical heavy chains and two identical light chains; disulfide-linked.

The protein resides in the secreted. The protein localises to the cell membrane. Its function is as follows. V region of the variable domain of immunoglobulin light chains that participates in the antigen recognition. Immunoglobulins, also known as antibodies, are membrane-bound or secreted glycoproteins produced by B lymphocytes. In the recognition phase of humoral immunity, the membrane-bound immunoglobulins serve as receptors which, upon binding of a specific antigen, trigger the clonal expansion and differentiation of B lymphocytes into immunoglobulins-secreting plasma cells. Secreted immunoglobulins mediate the effector phase of humoral immunity, which results in the elimination of bound antigens. The antigen binding site is formed by the variable domain of one heavy chain, together with that of its associated light chain. Thus, each immunoglobulin has two antigen binding sites with remarkable affinity for a particular antigen. The variable domains are assembled by a process called V-(D)-J rearrangement and can then be subjected to somatic hypermutations which, after exposure to antigen and selection, allow affinity maturation for a particular antigen. This Homo sapiens (Human) protein is Immunoglobulin lambda variable 7-46.